A 703-amino-acid chain; its full sequence is Phosphoribosylformylglycinamidine synthase subunit PurL (703 aa).

The active site involves His36. The ATP site is built by Tyr39 and Lys80. Position 82 (Glu82) interacts with Mg(2+). Substrate-binding positions include 83–86 (SHNH) and Arg105. The Proton acceptor role is filled by His84. Residue Asp106 participates in Mg(2+) binding. Gln226 serves as a coordination point for substrate. Asp252 serves as a coordination point for Mg(2+). 294–296 (ETQ) serves as a coordination point for substrate. Residues Asp468 and Gly505 each contribute to the ATP site. Residue Ser508 participates in substrate binding.

The protein belongs to the FGAMS family. As to quaternary structure, monomer. Part of the FGAM synthase complex composed of 1 PurL, 1 PurQ and 2 PurS subunits.

It localises to the cytoplasm. The enzyme catalyses N(2)-formyl-N(1)-(5-phospho-beta-D-ribosyl)glycinamide + L-glutamine + ATP + H2O = 2-formamido-N(1)-(5-O-phospho-beta-D-ribosyl)acetamidine + L-glutamate + ADP + phosphate + H(+). The protein operates within purine metabolism; IMP biosynthesis via de novo pathway; 5-amino-1-(5-phospho-D-ribosyl)imidazole from N(2)-formyl-N(1)-(5-phospho-D-ribosyl)glycinamide: step 1/2. Its function is as follows. Part of the phosphoribosylformylglycinamidine synthase complex involved in the purines biosynthetic pathway. Catalyzes the ATP-dependent conversion of formylglycinamide ribonucleotide (FGAR) and glutamine to yield formylglycinamidine ribonucleotide (FGAM) and glutamate. The FGAM synthase complex is composed of three subunits. PurQ produces an ammonia molecule by converting glutamine to glutamate. PurL transfers the ammonia molecule to FGAR to form FGAM in an ATP-dependent manner. PurS interacts with PurQ and PurL and is thought to assist in the transfer of the ammonia molecule from PurQ to PurL. This Sulfurisphaera tokodaii (strain DSM 16993 / JCM 10545 / NBRC 100140 / 7) (Sulfolobus tokodaii) protein is Phosphoribosylformylglycinamidine synthase subunit PurL.